The following is a 257-amino-acid chain: Photosystem I chlorophyll a/b-binding protein 2, chloroplastic (257 aa).

The N-terminal 43 residues, 1-43 (MASSLCASSAIAAISSPSFLGGKKLRLKKKLTVPAVSRPDASV), are a transit peptide targeting the chloroplast. Trp55 is a binding site for chlorophyll b. 3 residues coordinate chlorophyll a: Phe75, Ser81, and Glu94. Position 99 (Arg99) interacts with chlorophyll b. 2 helical membrane passes run 100-120 (WAML…IGIL) and 133-153 (YFTD…WAEG). Positions 152 and 155 each coordinate chlorophyll b. Residues Lys208, Glu209, Asn212, Arg214, Gln226, and His241 each contribute to the chlorophyll a site. Residues 215–235 (LAMLAVMGAWFQHIYTGTGPI) traverse the membrane as a helical segment.

The protein belongs to the light-harvesting chlorophyll a/b-binding (LHC) protein family. The LHC complex consists of chlorophyll a-b binding proteins. Red-emitting heterodimers with LHCA3 and LHCA5. Binds to carotenoids. Binds at least 14 chlorophylls (8 Chl-a and 6 Chl-b) and carotenoids such as lutein and neoxanthin. is required as a cofactor. In terms of processing, photoregulated by reversible phosphorylation of its threonine residues.

It localises to the plastid. The protein localises to the chloroplast thylakoid membrane. Functionally, the light-harvesting complex (LHC) functions as a light receptor, it captures and delivers excitation energy to photosystems with which it is closely associated, here photosystem I. This chain is Photosystem I chlorophyll a/b-binding protein 2, chloroplastic, found in Arabidopsis thaliana (Mouse-ear cress).